A 378-amino-acid polypeptide reads, in one-letter code: MTVPQERIEIRNIDPGTNPTRFARGWHCIGLAKDFRDGKPHQVKVFGTDLVVFADTAGKLHVLDAFCRHMGGNLARGEIKGDTIACPFHDWRWNGQGRCEAVPYARRTPKLGRTKAWTTMERNGVLFVWHCPQGSEPTPELAIPEIEGYEDGQWSDWTWTTIHVEGSHCREIVDNVVDMAHFFYVHFQMPEYFKNVFDGHIAGQHMRSYGRDDIKTGVQMDLPEAQTISDAFYYGPSFMLDTIYTVSEGTTIESKLINCHYPVTNNSFVLQFGTIVKKIEGMSEEQAAEMATMFTDGLEEQFAQDIEIWKHKSRIENPLLTEEDGPVYQLRRWYNQFYVDLEDVTPDMTQRFEFEVDTSRALESWHKEVEENLAGTAE.

Residues 26–128 enclose the Rieske domain; sequence WHCIGLAKDF…TMERNGVLFV (103 aa). [2Fe-2S] cluster-binding residues include C67, H69, C86, and H89. N175, H181, H186, and D305 together coordinate Fe cation.

In terms of assembly, homotrimer. The two-component system 3-ketosteroid-9-alpha-monooxygenase is composed of an oxygenase component KshA and a reductase component KshB. Requires [2Fe-2S] cluster as cofactor. Fe cation is required as a cofactor.

The catalysed reaction is androsta-1,4-diene-3,17-dione + 2 reduced [2Fe-2S]-[ferredoxin] + O2 + 2 H(+) = 9alpha-hydroxyandrosta-1,4-diene-3,17-dione + 2 oxidized [2Fe-2S]-[ferredoxin] + H2O. KSH activity is completely inhibited by zinc ions. KshA is specifically inhibited by Fe(3+), Co(2+), Zn(2+) and Ni(2+) ions. In terms of biological role, in vitro, catalyzes the introduction of a 9alpha-hydroxyl moiety into the ring B of 3-ketosteroid substrates such as 1,4-androstadiene-3,17-dione (ADD), 4-androstene-3,17-dione (AD), 4-androstene-17beta-ol-3-one (testosterone), 4-pregnene-3,20-dione (progesterone), 19-nor-4-androstene-3,17-dione (nordion), 1-(5alpha)-androstene-3,17-dione, 5alpha-androstane-3,17-dione and 5beta-androstane-3,17-dione. KSH has the highest activity with 3-keto-delta4 steroid substrates. This Rhodococcus rhodochrous protein is 3-ketosteroid-9-alpha-monooxygenase, oxygenase component.